A 180-amino-acid chain; its full sequence is Ubiquitin-conjugating enzyme E2 20 (180 aa).

The tract at residues 1–33 (MAAVNGYQGNTPADPPASNGSKQPAAPTKTVDS) is disordered. The 146-residue stretch at 35–180 (SVLKRLQSEL…VEKLYKPPSA (146 aa)) folds into the UBC core domain. C119 serves as the catalytic Glycyl thioester intermediate.

This sequence belongs to the ubiquitin-conjugating enzyme family. Expressed in all tissues with cell division activities and in mature leaves.

It catalyses the reaction S-ubiquitinyl-[E1 ubiquitin-activating enzyme]-L-cysteine + [E2 ubiquitin-conjugating enzyme]-L-cysteine = [E1 ubiquitin-activating enzyme]-L-cysteine + S-ubiquitinyl-[E2 ubiquitin-conjugating enzyme]-L-cysteine.. It participates in protein modification; protein ubiquitination. In terms of biological role, accepts the ubiquitin from the E1 complex and catalyzes its covalent attachment to other proteins. This chain is Ubiquitin-conjugating enzyme E2 20 (UBC20), found in Arabidopsis thaliana (Mouse-ear cress).